The chain runs to 526 residues: Histidine ammonia-lyase (526 aa).

Positions 143–145 (ASG) form a cross-link, 5-imidazolinone (Ala-Gly). The residue at position 144 (serine 144) is a 2,3-didehydroalanine (Ser).

This sequence belongs to the PAL/histidase family. In terms of processing, contains an active site 4-methylidene-imidazol-5-one (MIO), which is formed autocatalytically by cyclization and dehydration of residues Ala-Ser-Gly.

The protein resides in the cytoplasm. It carries out the reaction L-histidine = trans-urocanate + NH4(+). It participates in amino-acid degradation; L-histidine degradation into L-glutamate; N-formimidoyl-L-glutamate from L-histidine: step 1/3. The chain is Histidine ammonia-lyase from Aromatoleum aromaticum (strain DSM 19018 / LMG 30748 / EbN1) (Azoarcus sp. (strain EbN1)).